Consider the following 220-residue polypeptide: Large ribosomal subunit protein eL15 (220 aa).

The protein belongs to the eukaryotic ribosomal protein eL15 family.

The sequence is that of Large ribosomal subunit protein eL15 from Staphylothermus marinus (strain ATCC 43588 / DSM 3639 / JCM 9404 / F1).